The following is a 588-amino-acid chain: uncharacterized protein (588 aa).

Helical transmembrane passes span phenylalanine 14–valine 34, alanine 49–alanine 69, isoleucine 78–glycine 98, alanine 184–isoleucine 204, valine 235–glycine 255, valine 257–glutamate 274, and serine 275–aspartate 292. Serine 486 carries the post-translational modification Phosphoserine. A disordered region spans residues arginine 566–valine 588. A compositionally biased stretch (polar residues) spans valine 570 to valine 581.

The protein localises to the membrane. This is an uncharacterized protein from Arabidopsis thaliana (Mouse-ear cress).